Reading from the N-terminus, the 143-residue chain is UPF0299 membrane protein CGSHiEE_04225 (143 aa).

Helical transmembrane passes span 1–21 (MIQKLFLLVRSLVILSIMLSL), 33–52 (VPGSIWGLLLLFLGLTTRVI), 60–80 (GASLLIRFMAVLFVPVSVGII), and 92–112 (ILLVPNIVSTCVTLLVIGFLG).

Belongs to the UPF0299 family.

The protein resides in the cell inner membrane. In Haemophilus influenzae (strain PittEE), this protein is UPF0299 membrane protein CGSHiEE_04225.